We begin with the raw amino-acid sequence, 104 residues long: Pterin-4-alpha-carbinolamine dehydratase (104 aa).

Ala2 is modified (N-acetylalanine). Substrate-binding positions include Asp61–His63 and Ser78–Glu81.

Belongs to the pterin-4-alpha-carbinolamine dehydratase family. In terms of assembly, homotetramer and homodimer. Heterotetramer with HNF1A; formed by a dimer of dimers. Interacts with HNF1B (via HNF-p1 domain); the interaction increases HNF1B transactivation activity. Mainly expressed in the liver, in pancreatic cells, and in the kidney, especially in the distal convoluted tubule, in the cortical thick ascending limb of Henle's loop and in the connecting tubule.

It localises to the cytoplasm. The protein localises to the nucleus. The catalysed reaction is (4aS,6R)-4a-hydroxy-L-erythro-5,6,7,8-tetrahydrobiopterin = (6R)-L-erythro-6,7-dihydrobiopterin + H2O. Involved in tetrahydrobiopterin biosynthesis. Seems to both prevent the formation of 7-pterins and accelerate the formation of quinonoid-BH2. Coactivator for HNF1A-dependent transcription. Regulates the dimerization of homeodomain protein HNF1A and enhances its transcriptional activity. Also acts as a coactivator for HNF1B-dependent transcription. This Mus musculus (Mouse) protein is Pterin-4-alpha-carbinolamine dehydratase (Pcbd1).